The primary structure comprises 490 residues: ABC transporter ATP-binding protein ModF (490 aa).

2 consecutive ABC transporter domains span residues leucine 4–glutamate 235 and isoleucine 261–isoleucine 489. Residues glycine 36–serine 43 and glycine 293–serine 300 contribute to the ATP site.

Belongs to the ABC transporter superfamily.

Its subcellular location is the cell inner membrane. In terms of biological role, probably not involved in the transport of molybdenum into the cell. This chain is ABC transporter ATP-binding protein ModF (modF), found in Escherichia coli (strain K12).